A 512-amino-acid polypeptide reads, in one-letter code: MPIVAYDPDKVREADRAAVRMGVPGGILMENAGAAAASVIWDRFRPTGRVVILCGPGNNGGDGFVVARHLMIRGAEVVVLSTSVDRRGDSKAAEDMYLACGGRVLASSEVSDPEVSDLLGGACLVVDALLGTGSGGEIRGQVARLVELLLETYSGPLVALDMPTGFHGRTGVSLGVGVRADLTVTFLAPKSGAMFTPAFDHVGEMVVSPIGVPPRLVLPQRADVVGVGYEDLSHMRLPMWPGQNKSHRGMVAVLGGSGMFGGAPFLSAMGALCGGAGWVVCGVPSQWAPTYGHLVPESMVLPLPSDGRGDLTSEAWDVIASSYGDRIRCLVLGPGMGRGEGASSLVRRVLSSWDGPLVLDADGLRILADTGLPREARCSLWITPHEGEAACLLGTSSRWVVENRRDAAEALASRFGGVVLKGRNSVVMRGEALSVVCAGHPNLSVPGSGDVLAGIIGASIARMGDVEEAVCLAVILHGVAGERLASSGRADGILAREIAHQAALVLGGLGDV.

Positions 1 to 220 are NAD(P)H-hydrate epimerase; that stretch reads MPIVAYDPDK…GVPPRLVLPQ (220 aa). One can recognise a YjeF N-terminal domain in the interval 11 to 218; it reads VREADRAAVR…PIGVPPRLVL (208 aa). The segment at 58–62 is NADPHX 1; for epimerase activity; the sequence is NNGGD. Asn59 and Asp127 together coordinate K(+). The tract at residues 131-137 is NADPHX 1; for epimerase activity; it reads GTGSGGE. Asp161 is a binding site for (6S)-NADPHX. Thr164 is a binding site for K(+). One can recognise a YjeF C-terminal domain in the interval 228 to 509; sequence GYEDLSHMRL…HQAALVLGGL (282 aa). The interval 228–512 is ADP-dependent (S)-NAD(P)H-hydrate dehydratase; the sequence is GYEDLSHMRL…ALVLGGLGDV (285 aa). Gly335 is a binding site for (6S)-NADPHX. An NADPHX 2; for dehydratase activity region spans residues 385–391; it reads HEGEAAC. Residues 421-425 and 440-449 each bind ADP; these read KGRNS and HPNLSVPGSG. Position 450 (Asp450) interacts with (6S)-NADPHX.

The protein in the N-terminal section; belongs to the NnrE/AIBP family. In the C-terminal section; belongs to the NnrD/CARKD family. K(+) is required as a cofactor.

It carries out the reaction (6S)-NADHX + ADP = AMP + phosphate + NADH + H(+). The enzyme catalyses (6S)-NADPHX + ADP = AMP + phosphate + NADPH + H(+). It catalyses the reaction (6R)-NADHX = (6S)-NADHX. The catalysed reaction is (6R)-NADPHX = (6S)-NADPHX. Functionally, bifunctional enzyme that catalyzes the epimerization of the S- and R-forms of NAD(P)HX and the dehydration of the S-form of NAD(P)HX at the expense of ADP, which is converted to AMP. This allows the repair of both epimers of NAD(P)HX, a damaged form of NAD(P)H that is a result of enzymatic or heat-dependent hydration. In Thermanaerovibrio acidaminovorans (strain ATCC 49978 / DSM 6589 / Su883) (Selenomonas acidaminovorans), this protein is Bifunctional NAD(P)H-hydrate repair enzyme Nnr (nnr).